The sequence spans 503 residues: Annexin A11 (503 aa).

Composition is skewed to pro residues over residues 80–117 (GYPP…PGMP) and 123–167 (PGAP…PVPS). The tract at residues 80 to 172 (GYPPVPPGGF…QPVPSYPGYS (93 aa)) is disordered. Annexin repeat units lie at residues 198–269 (FDPL…ALMK), 270–341 (TPVL…SLSQ), 353–425 (SLVQ…AVVK), and 429–500 (NTPA…KICG). N6-acetyllysine is present on residues lysine 246 and lysine 253. Residue lysine 477 is modified to N6-acetyllysine.

The protein belongs to the annexin family. Interacts with S100A6. Interacts with PDCD6 in a calcium-dependent manner. Interacts with KIF23 during cytokinesis.

It is found in the cytoplasm. Its subcellular location is the melanosome. It localises to the nucleus envelope. The protein localises to the nucleus. The protein resides in the nucleoplasm. It is found in the cytoskeleton. Its subcellular location is the spindle. Its function is as follows. Required for midbody formation and completion of the terminal phase of cytokinesis. Binds specifically to calcyclin in a calcium-dependent manner. The protein is Annexin A11 (Anxa11) of Mus musculus (Mouse).